We begin with the raw amino-acid sequence, 357 residues long: Histidinol-phosphate aminotransferase 2 (357 aa).

Residue Lys-216 is modified to N6-(pyridoxal phosphate)lysine.

This sequence belongs to the class-II pyridoxal-phosphate-dependent aminotransferase family. Histidinol-phosphate aminotransferase subfamily. Homodimer. Pyridoxal 5'-phosphate serves as cofactor.

It catalyses the reaction L-histidinol phosphate + 2-oxoglutarate = 3-(imidazol-4-yl)-2-oxopropyl phosphate + L-glutamate. It functions in the pathway amino-acid biosynthesis; L-histidine biosynthesis; L-histidine from 5-phospho-alpha-D-ribose 1-diphosphate: step 7/9. This chain is Histidinol-phosphate aminotransferase 2, found in Idiomarina loihiensis (strain ATCC BAA-735 / DSM 15497 / L2-TR).